Here is a 211-residue protein sequence, read N- to C-terminus: Glycerol-3-phosphate acyltransferase 2 (211 aa).

A run of 5 helical transmembrane segments spans residues 6-26, 57-77, 82-102, 124-144, and 148-168; these read FASL…VVVG, IIVF…PVIF, HYLC…PIFL, FFLI…MVSL, and ISVV…LSII.

The protein belongs to the PlsY family. In terms of assembly, probably interacts with PlsX.

The protein resides in the cell membrane. The enzyme catalyses an acyl phosphate + sn-glycerol 3-phosphate = a 1-acyl-sn-glycero-3-phosphate + phosphate. It participates in lipid metabolism; phospholipid metabolism. Its function is as follows. Catalyzes the transfer of an acyl group from acyl-phosphate (acyl-PO(4)) to glycerol-3-phosphate (G3P) to form lysophosphatidic acid (LPA). This enzyme utilizes acyl-phosphate as fatty acyl donor, but not acyl-CoA or acyl-ACP. The protein is Glycerol-3-phosphate acyltransferase 2 of Lactobacillus acidophilus (strain ATCC 700396 / NCK56 / N2 / NCFM).